The following is a 26-amino-acid chain: uncharacterized protein (26 aa).

Post-translationally, phosphorylated by YfhK.

Probable member of a two-component regulatory system YfhA/YfhK. This is an uncharacterized protein from Klebsiella oxytoca.